The following is a 429-amino-acid chain: MFS-type efflux pump MSMEG_3705 (429 aa).

12 helical membrane-spanning segments follow: residues 21 to 41, 59 to 79, 86 to 106, 115 to 137, 150 to 170, 181 to 201, 228 to 248, 264 to 284, 299 to 319, 327 to 347, 361 to 381, and 397 to 417; these read AWAAVGVLALVGTLNYVDRFL, AIGVINGFGFLIVYAVMGIAV, GAFGAVVAGCLTLWGTMTMLG, LALTRVGVAIGEAGSTPAAHAYV, LAVITIAIPLASTASLLGGGL, FVIMGAVSVVLAPLVLLVVGV, FLIVVAGTAFISAAGYSLTTF, VGVEYGLATGAIGVLGLLIVG, LWIVVTLTLVLLPASVLAFVV, LFLALSYAIGTSYLAPSIAAI, AMFLFFNAVFGSVGPFVVGML, and ALLLLVAAMQLVGAICYWLAS.

Belongs to the major facilitator superfamily.

It is found in the cell inner membrane. Its function is as follows. Probably plays a role in bacterial growth and resistance to antibiotics. This is MFS-type efflux pump MSMEG_3705 from Mycolicibacterium smegmatis (strain ATCC 700084 / mc(2)155) (Mycobacterium smegmatis).